The following is a 304-amino-acid chain: Acetylglutamate kinase (304 aa).

Substrate-binding positions include 75–76, Arg-97, and Asn-202; that span reads GG.

It belongs to the acetylglutamate kinase family. ArgB subfamily.

It is found in the cytoplasm. It catalyses the reaction N-acetyl-L-glutamate + ATP = N-acetyl-L-glutamyl 5-phosphate + ADP. It functions in the pathway amino-acid biosynthesis; L-arginine biosynthesis; N(2)-acetyl-L-ornithine from L-glutamate: step 2/4. Its function is as follows. Catalyzes the ATP-dependent phosphorylation of N-acetyl-L-glutamate. This Parvibaculum lavamentivorans (strain DS-1 / DSM 13023 / NCIMB 13966) protein is Acetylglutamate kinase.